The primary structure comprises 398 residues: UDP-D-apiose/UDP-D-xylose synthase (398 aa).

57–88 (DVYCDKIRHLVDPAPPHLHGRISFHRLNIKND) is a binding site for NAD(+). Substrate is bound at residue Arg190. The active-site Proton acceptor is the Tyr193. 193–197 (YACAK) contributes to the NAD(+) binding site. Position 222 (Asn222) interacts with substrate. Position 243 (Arg243) interacts with NAD(+). Substrate contacts are provided by residues 244–248 (VLACF), 261–268 (VDGGQSQR), and 345–349 (DSDKR).

The protein belongs to the NAD(P)-dependent epimerase/dehydratase family. As to quaternary structure, homodimer. Requires NAD(+) as cofactor.

The protein localises to the cytoplasm. Functionally, catalyzes the conversion of UDP-D-glucuronate to a mixture of UDP-D-apiose and UDP-D-xylose. D-Apiose (3-C-hydroxymethyl-d-erythrose) is the only plant cell wall monosaccharide with a branched carbon skeleton and found in rhamnogalacturonan II (RG-II), apiogalacturonan, and several apioglycosides. This is UDP-D-apiose/UDP-D-xylose synthase from Oryza sativa subsp. japonica (Rice).